An 811-amino-acid chain; its full sequence is Elongation factor G, mitochondrial (811 aa).

The N-terminal 64 residues, 1-64, are a transit peptide targeting the mitochondrion; that stretch reads MSAIARAAAR…FQQSFQRRWA (64 aa). Residues 96–394 form the tr-type G domain; that stretch reads RRQRNVGISA…GVCAYLPNPS (299 aa). GTP contacts are provided by residues 105-112, 192-196, and 246-249; these read AHIDSGKT, DTPGH, and NKMD.

Belongs to the TRAFAC class translation factor GTPase superfamily. Classic translation factor GTPase family. EF-G/EF-2 subfamily.

It is found in the mitochondrion. It participates in protein biosynthesis; polypeptide chain elongation. In terms of biological role, mitochondrial GTPase that catalyzes the GTP-dependent ribosomal translocation step during translation elongation. During this step, the ribosome changes from the pre-translocational (PRE) to the post-translocational (POST) state as the newly formed A-site-bound peptidyl-tRNA and P-site-bound deacylated tRNA move to the P and E sites, respectively. Catalyzes the coordinated movement of the two tRNA molecules, the mRNA and conformational changes in the ribosome. In Cryptococcus neoformans var. neoformans serotype D (strain JEC21 / ATCC MYA-565) (Filobasidiella neoformans), this protein is Elongation factor G, mitochondrial.